We begin with the raw amino-acid sequence, 464 residues long: Protein FAM90A15 (464 aa).

Disordered regions lie at residues 1–42, 70–389, and 415–437; these read MMAR…DPRL, PATL…HDGA, and HSPE…SEAP. Composition is skewed to basic and acidic residues over residues 74–89 and 97–114; these read GKKE…KPRV and NKDK…DPQR. Residues 180–197 are compositionally biased toward low complexity; sequence LASLSPLRKASLSSSSSL.

This sequence belongs to the FAM90 family.

The polypeptide is Protein FAM90A15 (Homo sapiens (Human)).